A 673-amino-acid polypeptide reads, in one-letter code: Thimet-like oligopeptidase (673 aa).

H465 provides a ligand contact to Zn(2+). E466 is an active-site residue. Residues H469 and H472 each contribute to the Zn(2+) site.

The protein belongs to the peptidase M3 family. Zn(2+) serves as cofactor.

This is Thimet-like oligopeptidase from Dictyostelium discoideum (Social amoeba).